The chain runs to 498 residues: Cytochrome c-552 (498 aa).

An N-terminal signal peptide occupies residues 1-31 (MKNKERKLKSWQGWLIFSSSMVVVFCLGLLA). His-119 serves as a coordination point for heme c. Residues Cys-148, Cys-151, and Lys-152 each coordinate heme. 6 residues coordinate heme c: Cys-186, Cys-189, His-190, Cys-228, Cys-231, and His-232. Glu-234, Tyr-235, Lys-280, and Gln-282 together coordinate Ca(2+). Substrate is bound at residue Tyr-235. His-283 contributes to the substrate binding site. Residues His-294, Cys-301, Cys-304, His-305, His-319, Cys-332, Cys-335, His-336, and His-411 each coordinate heme c.

The protein belongs to the cytochrome c-552 family. It depends on Ca(2+) as a cofactor. Heme c is required as a cofactor.

It localises to the periplasm. The enzyme catalyses 6 Fe(III)-[cytochrome c] + NH4(+) + 2 H2O = 6 Fe(II)-[cytochrome c] + nitrite + 8 H(+). It functions in the pathway nitrogen metabolism; nitrate reduction (assimilation). In terms of biological role, catalyzes the reduction of nitrite to ammonia, consuming six electrons in the process. This is Cytochrome c-552 from Porphyromonas gingivalis (strain ATCC BAA-308 / W83).